The primary structure comprises 754 residues: 1,4-alpha-glucan branching enzyme GlgB (754 aa).

The active-site Nucleophile is aspartate 431. Glutamate 484 serves as the catalytic Proton donor.

Belongs to the glycosyl hydrolase 13 family. GlgB subfamily. In terms of assembly, monomer.

It catalyses the reaction Transfers a segment of a (1-&gt;4)-alpha-D-glucan chain to a primary hydroxy group in a similar glucan chain.. It functions in the pathway glycan biosynthesis; glycogen biosynthesis. Its function is as follows. Catalyzes the formation of the alpha-1,6-glucosidic linkages in glycogen by scission of a 1,4-alpha-linked oligosaccharide from growing alpha-1,4-glucan chains and the subsequent attachment of the oligosaccharide to the alpha-1,6 position. This chain is 1,4-alpha-glucan branching enzyme GlgB, found in Prochlorococcus marinus (strain AS9601).